The sequence spans 180 residues: Adenine phosphoribosyltransferase (180 aa).

Ser-2 is subject to N-acetylserine. Residues Ser-4, Ser-15, and Ser-30 each carry the phosphoserine modification. Tyr-60 is modified (phosphotyrosine). The residue at position 66 (Ser-66) is a Phosphoserine. At Lys-114 the chain carries N6-acetyllysine. Thr-135 bears the Phosphothreonine mark.

Belongs to the purine/pyrimidine phosphoribosyltransferase family. Homodimer.

It is found in the cytoplasm. It catalyses the reaction AMP + diphosphate = 5-phospho-alpha-D-ribose 1-diphosphate + adenine. The protein operates within purine metabolism; AMP biosynthesis via salvage pathway; AMP from adenine: step 1/1. Its function is as follows. Catalyzes a salvage reaction resulting in the formation of AMP, that is energically less costly than de novo synthesis. This Mus pahari (Gairdner's shrew-mouse) protein is Adenine phosphoribosyltransferase.